The sequence spans 150 residues: Large ribosomal subunit protein uL22c (150 aa).

It belongs to the universal ribosomal protein uL22 family. As to quaternary structure, part of the 50S ribosomal subunit.

The protein resides in the plastid. Its subcellular location is the chloroplast. Its function is as follows. This protein binds specifically to 23S rRNA. The globular domain of the protein is located near the polypeptide exit tunnel on the outside of the subunit, while an extended beta-hairpin is found that lines the wall of the exit tunnel in the center of the 70S ribosome. The polypeptide is Large ribosomal subunit protein uL22c (rpl22) (Fagopyrum esculentum subsp. ancestrale (Wild buckwheat)).